A 486-amino-acid chain; its full sequence is Glutamyl-tRNA(Gln) amidotransferase subunit A (486 aa).

Residues lysine 78 and serine 153 each act as charge relay system in the active site. Catalysis depends on serine 177, which acts as the Acyl-ester intermediate.

It belongs to the amidase family. GatA subfamily. Heterotrimer of A, B and C subunits.

The enzyme catalyses L-glutamyl-tRNA(Gln) + L-glutamine + ATP + H2O = L-glutaminyl-tRNA(Gln) + L-glutamate + ADP + phosphate + H(+). Functionally, allows the formation of correctly charged Gln-tRNA(Gln) through the transamidation of misacylated Glu-tRNA(Gln) in organisms which lack glutaminyl-tRNA synthetase. The reaction takes place in the presence of glutamine and ATP through an activated gamma-phospho-Glu-tRNA(Gln). The protein is Glutamyl-tRNA(Gln) amidotransferase subunit A of Desulfosudis oleivorans (strain DSM 6200 / JCM 39069 / Hxd3) (Desulfococcus oleovorans).